The primary structure comprises 60 residues: Histidine-rich metal-binding polypeptide (60 aa).

A disordered region spans residues 1-60; it reads MAHHEEQHGGHHHHHHHTHHHHYHGGEHHHHHHSSHHEEGCCSTSDSHHQEEGCCHGHHE. Over residues 10 to 35 the composition is skewed to basic residues; that stretch reads GHHHHHHHTHHHHYHGGEHHHHHHSS. A compositionally biased stretch (basic and acidic residues) spans 36–60; it reads HHEEGCCSTSDSHHQEEGCCHGHHE. 2 consecutive repeat copies span residues 38–42 and 51–55. A 2 X 5 AA repeats of E-E-G-C-C region spans residues 38–55; sequence EEGCCSTSDSHHQEEGCC.

Its function is as follows. Strongly binds nickel and zinc. Binds other metals less strongly: cobalt &gt; copper &gt; cadmium &gt; manganese. May act to increase, or at least to preserve, urease activity. Exact function is still unknown. The sequence is that of Histidine-rich metal-binding polypeptide (hpn) from Helicobacter pylori (strain J99 / ATCC 700824) (Campylobacter pylori J99).